Consider the following 504-residue polypeptide: MAISDEPESVATALNHSSLRRRPSATSTAGLFNSPETTTDSSGDDLAKDSGSDDSINSDDAAVNSQQQNEKQDTDFSVLKFAYRPSVPAHRKVKESPLSSDTIFRQSHAGLFNLCIVVLVAVNSRLIIENLMKYGWLIKSGFWFSSKSLRDWPLFMCCLSLVVFPFAAFIVEKLAQRKCIPEPVVVVLHIIITSTSLFYPVLVILRCDSAFVSGVTLMLFSCVVWLKLVSYAHTNYDMRALTKLVEKGEALLDTLNMDYPYNVSFKSLAYFLVAPTLCYQPSYPRTPYIRKGWLFRQLVKLIIFTGVMGFIIEQYINPIVQNSQHPLKGNLLYATERVLKLSVPNLYVWLCMFYCFFHLWLNILAELLRFGDREFYKDWWNAKTVEDYWRMWNMPVHKWMIRHLYFPCLRHGLPKAAALLIAFLVSALFHELCIAVPCHIFKLWAFGGIMFQVPLVLITNYLQNKFRNSMVGNMIFWFIFSILGQPMCVLLYYHDLMNRKGKLD.

The disordered stretch occupies residues 1–72; the sequence is MAISDEPESV…VNSQQQNEKQ (72 aa). Over residues 24–41 the composition is skewed to polar residues; it reads SATSTAGLFNSPETTTDS. Over residues 53–65 the composition is skewed to low complexity; it reads DDSINSDDAAVNS. 7 consecutive transmembrane segments (helical) span residues 108-128, 152-172, 184-204, 209-229, 259-279, 301-321, and 348-368; these read HAGL…RLII, WPLF…FIVE, VVVV…VLVI, SAFV…LKLV, YPYN…TLCY, LIIF…PIVQ, and VWLC…AELL. The short motif at 375-381 is the FYXDWWN motif element; sequence FYKDWWN. 3 helical membrane-spanning segments follow: residues 416 to 436, 438 to 458, and 471 to 491; these read AAAL…CIAV, CHIF…LVLI, and VGNM…CVLL. His-430 is a catalytic residue.

It belongs to the membrane-bound acyltransferase family. Sterol o-acyltransferase subfamily. Highly expressed in flowers and pods. Expressed at low levels in roots, stems and leaves.

The protein localises to the endoplasmic reticulum membrane. It catalyses the reaction an acyl-CoA + a 1,2-diacyl-sn-glycerol = a triacyl-sn-glycerol + CoA. It functions in the pathway glycerolipid metabolism; triacylglycerol biosynthesis. Its function is as follows. Major contributors to triacylglycerol (TAG) synthesis and oil accumulation in developing seeds. Catalyzes the acylation of the sn-3 hydroxy group of sn-1,2-diacylglycerol using acyl-CoA. Has a marked preference for oleoyl-CoA and sn-1,2-dioleoylglycerol over vernoloyl-CoA and sn-1,2-divernoloylglycerol. The protein is Diacylglycerol O-acyltransferase 1B of Glycine max (Soybean).